The sequence spans 507 residues: Carnosic acid synthase (507 aa).

A helical transmembrane segment spans residues 6 to 23; that stretch reads VFSLAFLAAWFIVVFPRW. Cys450 is a binding site for heme.

It belongs to the cytochrome P450 family. Requires heme as cofactor. In terms of tissue distribution, expressed in glandular trichomes of young leaves.

Its subcellular location is the membrane. The catalysed reaction is 11-hydroxyferruginol + 3 reduced [NADPH--hemoprotein reductase] + 3 O2 = carnosate + 3 oxidized [NADPH--hemoprotein reductase] + 4 H2O + 4 H(+). It carries out the reaction miltiradiene + 2 reduced [NADPH--hemoprotein reductase] + 2 O2 = miltiradien-20-al + 2 oxidized [NADPH--hemoprotein reductase] + 3 H2O + 2 H(+). It catalyses the reaction ferruginol + 3 reduced [NADPH--hemoprotein reductase] + 3 O2 = pisiferate + 3 oxidized [NADPH--hemoprotein reductase] + 4 H2O + 4 H(+). Its pathway is secondary metabolite biosynthesis; terpenoid biosynthesis. In terms of biological role, monooxygenase involved in the biosynthesis of carnosate, a potent antioxidant labdane-related diterpene natural product. Catalyzes the oxidation of 11-hydroxyferruginol to produce carnosate. Mediates the conversion of miltiradien into miltiradien-20-al. Also involved in the production of pisiferic acid and derivative products from ferruginol. The protein is Carnosic acid synthase of Rosmarinus officinalis (Rosemary).